The sequence spans 189 residues: Elongation factor P (189 aa).

The protein belongs to the elongation factor P family.

It is found in the cytoplasm. It functions in the pathway protein biosynthesis; polypeptide chain elongation. In terms of biological role, involved in peptide bond synthesis. Stimulates efficient translation and peptide-bond synthesis on native or reconstituted 70S ribosomes in vitro. Probably functions indirectly by altering the affinity of the ribosome for aminoacyl-tRNA, thus increasing their reactivity as acceptors for peptidyl transferase. In Pseudomonas putida (strain GB-1), this protein is Elongation factor P.